A 432-amino-acid chain; its full sequence is Adenylosuccinate synthetase (432 aa).

GTP is bound by residues 13–19 (GDEGKGK) and 41–43 (GHT). D14 (proton acceptor) is an active-site residue. D14 and G41 together coordinate Mg(2+). IMP is bound by residues 14–17 (DEGK), 39–42 (NAGH), T130, R144, Q225, T240, and R304. The active-site Proton donor is H42. 300–306 (AVTGRPR) serves as a coordination point for substrate. GTP contacts are provided by residues R306, 332–334 (KLD), and 415–417 (STG).

This sequence belongs to the adenylosuccinate synthetase family. In terms of assembly, homodimer. Mg(2+) is required as a cofactor.

The protein resides in the cytoplasm. The catalysed reaction is IMP + L-aspartate + GTP = N(6)-(1,2-dicarboxyethyl)-AMP + GDP + phosphate + 2 H(+). The protein operates within purine metabolism; AMP biosynthesis via de novo pathway; AMP from IMP: step 1/2. Plays an important role in the de novo pathway of purine nucleotide biosynthesis. Catalyzes the first committed step in the biosynthesis of AMP from IMP. The chain is Adenylosuccinate synthetase from Actinobacillus succinogenes (strain ATCC 55618 / DSM 22257 / CCUG 43843 / 130Z).